A 248-amino-acid polypeptide reads, in one-letter code: DNA repair protein RecO (248 aa).

It belongs to the RecO family.

Functionally, involved in DNA repair and RecF pathway recombination. The chain is DNA repair protein RecO from Streptomyces griseus subsp. griseus (strain JCM 4626 / CBS 651.72 / NBRC 13350 / KCC S-0626 / ISP 5235).